A 138-amino-acid chain; its full sequence is Nucleoside diphosphate kinase (138 aa).

Positions 10, 58, 86, 92, 103, and 113 each coordinate ATP. Histidine 116 acts as the Pros-phosphohistidine intermediate in catalysis.

The protein belongs to the NDK family. As to quaternary structure, homotetramer. Mg(2+) is required as a cofactor.

It localises to the cytoplasm. The catalysed reaction is a 2'-deoxyribonucleoside 5'-diphosphate + ATP = a 2'-deoxyribonucleoside 5'-triphosphate + ADP. It catalyses the reaction a ribonucleoside 5'-diphosphate + ATP = a ribonucleoside 5'-triphosphate + ADP. Major role in the synthesis of nucleoside triphosphates other than ATP. The ATP gamma phosphate is transferred to the NDP beta phosphate via a ping-pong mechanism, using a phosphorylated active-site intermediate. The sequence is that of Nucleoside diphosphate kinase from Glaesserella parasuis serovar 5 (strain SH0165) (Haemophilus parasuis).